A 322-amino-acid polypeptide reads, in one-letter code: HPr kinase/phosphorylase (322 aa).

Active-site residues include His142 and Lys163. 157–164 (GASGVGKS) provides a ligand contact to ATP. Ser164 contributes to the Mg(2+) binding site. Asp181 functions as the Proton acceptor; for phosphorylation activity. Proton donor; for dephosphorylation activity in the catalytic mechanism. The tract at residues 205-214 (MEIRGIGIID) is important for the catalytic mechanism of both phosphorylation and dephosphorylation. Glu206 lines the Mg(2+) pocket. The active site involves Arg247. Positions 268–273 (PVKVGR) are important for the catalytic mechanism of dephosphorylation.

It belongs to the HPrK/P family. Homohexamer. Mg(2+) is required as a cofactor.

The catalysed reaction is [HPr protein]-L-serine + ATP = [HPr protein]-O-phospho-L-serine + ADP + H(+). The enzyme catalyses [HPr protein]-O-phospho-L-serine + phosphate + H(+) = [HPr protein]-L-serine + diphosphate. In terms of biological role, catalyzes the ATP- as well as the pyrophosphate-dependent phosphorylation of a specific serine residue in HPr, a phosphocarrier protein of the phosphoenolpyruvate-dependent sugar phosphotransferase system (PTS). HprK/P also catalyzes the pyrophosphate-producing, inorganic phosphate-dependent dephosphorylation (phosphorolysis) of seryl-phosphorylated HPr (P-Ser-HPr). The two antagonistic activities of HprK/P are regulated by several intracellular metabolites, which change their concentration in response to the absence or presence of rapidly metabolisable carbon sources (glucose, fructose, etc.) in the growth medium. Therefore, by controlling the phosphorylation state of HPr, HPrK/P is a sensor enzyme that plays a major role in the regulation of carbon metabolism and sugar transport: it mediates carbon catabolite repression (CCR), and regulates PTS-catalyzed carbohydrate uptake and inducer exclusion. In Lactobacillus acidophilus (strain ATCC 700396 / NCK56 / N2 / NCFM), this protein is HPr kinase/phosphorylase.